We begin with the raw amino-acid sequence, 1398 residues long: DNA-directed RNA polymerase subunit beta' (1398 aa).

Zn(2+) is bound by residues Cys73, Cys75, Cys88, and Cys91. Asp464, Asp466, and Asp468 together coordinate Mg(2+). 4 residues coordinate Zn(2+): Cys823, Cys897, Cys904, and Cys907.

It belongs to the RNA polymerase beta' chain family. The RNAP catalytic core consists of 2 alpha, 1 beta, 1 beta' and 1 omega subunit. When a sigma factor is associated with the core the holoenzyme is formed, which can initiate transcription. The cofactor is Mg(2+). Zn(2+) serves as cofactor.

The catalysed reaction is RNA(n) + a ribonucleoside 5'-triphosphate = RNA(n+1) + diphosphate. DNA-dependent RNA polymerase catalyzes the transcription of DNA into RNA using the four ribonucleoside triphosphates as substrates. The polypeptide is DNA-directed RNA polymerase subunit beta' (Gluconacetobacter diazotrophicus (strain ATCC 49037 / DSM 5601 / CCUG 37298 / CIP 103539 / LMG 7603 / PAl5)).